We begin with the raw amino-acid sequence, 530 residues long: Probable cytochrome P450 519A1 (530 aa).

Residues 1-21 (MESIINLIFYIIIFLILIDFL) form a helical membrane-spanning segment. Cys-476 provides a ligand contact to heme.

The protein belongs to the cytochrome P450 family. Heme is required as a cofactor.

The protein resides in the membrane. In Dictyostelium discoideum (Social amoeba), this protein is Probable cytochrome P450 519A1 (cyp519A1).